We begin with the raw amino-acid sequence, 488 residues long: UDP-N-acetylmuramoyl-L-alanyl-D-glutamate--2,6-diaminopimelate ligase (488 aa).

Ser-31 contacts UDP-N-acetyl-alpha-D-muramoyl-L-alanyl-D-glutamate. Gly-109–Ser-115 is an ATP binding site. UDP-N-acetyl-alpha-D-muramoyl-L-alanyl-D-glutamate is bound by residues Asn-150, Thr-151–Thr-152, Ser-178, and Arg-186. At Lys-218 the chain carries N6-carboxylysine. Meso-2,6-diaminopimelate contacts are provided by residues Arg-384, Asp-408 to Arg-411, Gly-458, and Glu-462. Positions Asp-408 to Arg-411 match the Meso-diaminopimelate recognition motif motif.

The protein belongs to the MurCDEF family. MurE subfamily. Requires Mg(2+) as cofactor. Post-translationally, carboxylation is probably crucial for Mg(2+) binding and, consequently, for the gamma-phosphate positioning of ATP.

It localises to the cytoplasm. It carries out the reaction UDP-N-acetyl-alpha-D-muramoyl-L-alanyl-D-glutamate + meso-2,6-diaminopimelate + ATP = UDP-N-acetyl-alpha-D-muramoyl-L-alanyl-gamma-D-glutamyl-meso-2,6-diaminopimelate + ADP + phosphate + H(+). It functions in the pathway cell wall biogenesis; peptidoglycan biosynthesis. Catalyzes the addition of meso-diaminopimelic acid to the nucleotide precursor UDP-N-acetylmuramoyl-L-alanyl-D-glutamate (UMAG) in the biosynthesis of bacterial cell-wall peptidoglycan. This Bacillus licheniformis (strain ATCC 14580 / DSM 13 / JCM 2505 / CCUG 7422 / NBRC 12200 / NCIMB 9375 / NCTC 10341 / NRRL NRS-1264 / Gibson 46) protein is UDP-N-acetylmuramoyl-L-alanyl-D-glutamate--2,6-diaminopimelate ligase.